A 118-amino-acid chain; its full sequence is UPF0295 protein BCE_0593 (118 aa).

A run of 2 helical transmembrane segments spans residues 12–32 and 43–63; these read IRTF…LGVF and FMMV…WIGM.

The protein belongs to the UPF0295 family.

It localises to the cell membrane. This chain is UPF0295 protein BCE_0593, found in Bacillus cereus (strain ATCC 10987 / NRS 248).